We begin with the raw amino-acid sequence, 599 residues long: Exocyst complex component EXO70B2 (599 aa).

Residues 38–58 (GASGNRGGDPRPTPSRGGSNV) form a disordered region.

Belongs to the EXO70 family. In terms of assembly, self interacts. Interacts with EXO70B1. Interacts with the exocyst subunits EXO70H1, SEC5A and SEC15B. Binds to SNAP33. Subunit of the exocyst complex that mediates vesicle tethering during exocytosis. Binds to PUB22. In terms of processing, target of the E3 ubiquitin-protein ligase PUB22 that mediates its ubiquitination and degradation via the 26S proteasome to attenuate pathogen-associated molecular patterns (PAMP)-induced signaling, especially is response to the bacterial elicitor flg22. Mostly expressed in leaves and, to a lower extent, in roots, cotyledons, internodes, flower buds, siliques and anthers.

The protein localises to the cytoplasmic vesicle. Its subcellular location is the phagosome. It localises to the cytoplasm. It is found in the nucleus. Functionally, component of an exocyst subcomplex specifically involved in autophagy-related, Golgi-independent membrane traffic to the vacuole. Regulates autophagosome formation and autophagy-related Golgi-independent import into the vacuole. Positive regulator of defense responses to pathogenic bacteria (e.g. P.syringae pv. maculicola), to the biotrophic oomycete H.arabidopsidis and to fungi (e.g. B.graminis hordei), especially in cell wall apposition formation related to plant defense. Required for both immediate and later responses triggered by pathogen-associated molecular patterns (PAMPs). Positive regulator of abscisic acid (ABA)-independent mannitol (drought)-promoted stomatal closure. The polypeptide is Exocyst complex component EXO70B2 (Arabidopsis thaliana (Mouse-ear cress)).